The primary structure comprises 75 residues: Putative antitoxin VapB12 (75 aa).

Functionally, putative antitoxin component of a possible type II toxin-antitoxin (TA) system. The cognate toxin is VapC12. This chain is Putative antitoxin VapB12 (vapB12), found in Mycobacterium tuberculosis (strain CDC 1551 / Oshkosh).